The primary structure comprises 214 residues: UPF0725 protein At1g19565 (214 aa).

The interval 56–92 is disordered; sequence EEEYEPSLPSSESPTDSCHADHESPDSPKYQQPAPGE.

The protein belongs to the UPF0725 (EMB2204) family.

In Arabidopsis thaliana (Mouse-ear cress), this protein is UPF0725 protein At1g19565.